The following is a 277-amino-acid chain: Methylglyoxal reductase DkgA (277 aa).

Tyr-51 serves as the catalytic Proton donor. His-107 serves as a coordination point for substrate. 187–241 is an NADP(+) binding site; the sequence is SPLAQGGKGVFDQEIIRKLAQQYNKTPAQIVIRWHLDSGLIVIPKSVTPARIREN.

Belongs to the aldo/keto reductase family. Monomer.

The protein localises to the cytoplasm. It catalyses the reaction hydroxyacetone + NADP(+) = methylglyoxal + NADPH + H(+). Functionally, aldo-keto reductase that significantly contributes to cellular methylglyoxal detoxification by catalyzing the NADPH-dependent conversion of methylglyoxal to acetol. In Yersinia pestis, this protein is Methylglyoxal reductase DkgA.